The following is a 55-amino-acid chain: Large ribosomal subunit protein bL33B (55 aa).

This sequence belongs to the bacterial ribosomal protein bL33 family.

The protein is Large ribosomal subunit protein bL33B of Salinispora arenicola (strain CNS-205).